Reading from the N-terminus, the 330-residue chain is Putative F-box protein At1g57690 (330 aa).

Residues 25-72 form the F-box domain; sequence VDIISSLPDVILQHILFSFQTKYAIRTSVLSKRWRHEADAINKALSQY.

The protein is Putative F-box protein At1g57690 of Arabidopsis thaliana (Mouse-ear cress).